The chain runs to 499 residues: Cysteine--tRNA ligase (499 aa).

C29 serves as a coordination point for Zn(2+). Residues 31-41 (VTVYDLCHLGH) carry the 'HIGH' region motif. Positions 213, 238, and 242 each coordinate Zn(2+). A 'KMSKS' region motif is present at residues 270-274 (KMSKS). Position 273 (K273) interacts with ATP.

This sequence belongs to the class-I aminoacyl-tRNA synthetase family. As to quaternary structure, monomer. Zn(2+) serves as cofactor.

The protein resides in the cytoplasm. It carries out the reaction tRNA(Cys) + L-cysteine + ATP = L-cysteinyl-tRNA(Cys) + AMP + diphosphate. This is Cysteine--tRNA ligase from Prochlorococcus marinus (strain MIT 9303).